We begin with the raw amino-acid sequence, 627 residues long: Neutral endopeptidase (627 aa).

Residues M1–W627 form the Peptidase M13 domain. A Zn(2+)-binding site is contributed by H475. E476 is an active-site residue. Zn(2+)-binding residues include H479 and E535. The active-site Proton donor is D539.

It belongs to the peptidase M13 family. Monomer. The cofactor is Zn(2+).

In terms of biological role, endopeptidase with broad substrate specificity for several oligopeptides. In Lactococcus lactis subsp. lactis (strain IL1403) (Streptococcus lactis), this protein is Neutral endopeptidase (pepO).